Consider the following 231-residue polypeptide: Eukaryotic translation initiation factor 4E-1 (231 aa).

Residues 1 to 55 (MVVEDTQKSSITDDQITANPNNENEDLEEGEILDDDDSSATSRPPSSSGALARNP) form a disordered region. Residues 8–18 (KSSITDDQITA) are compositionally biased toward polar residues. The segment covering 23–38 (ENEDLEEGEILDDDDS) has biased composition (acidic residues). Low complexity predominate over residues 39-48 (SATSRPPSSS). 2 EIF4G-binding regions span residues 56-59 (HPLE) and 66-102 (FDNPSAKSKQAAWGSSIRPIYTFATVEEFWSIYNNIH). Residues 74-79 (KQAAWG), K106, and 124-125 (WE) each bind mRNA. The cysteines at positions 129 and 167 are disulfide-linked. An EIF4G-binding region spans residues 150–159 (YTLLGMIGEQ). MRNA-binding positions include 174 to 179 (RNRQEK) and 219 to 223 (KKHDR).

It belongs to the eukaryotic initiation factor 4E family. As to quaternary structure, EIF4F is a multi-subunit complex, the composition of which varies with external and internal environmental conditions. It is composed of at least EIF4A, EIF4E and EIF4G. EIF4E is also known to interact with other partners. In higher plants two isoforms of EIF4F have been identified, named isoform EIF4F and isoform EIF(iso)4F. Isoform EIF4F has subunits p220 and p26, whereas isoform EIF(iso)4F has subunits p82 and p28. In terms of assembly, (Microbial infection) Interacts with potyvirus peanut stripe virus (PStV) helper component proteinase (HC-Pro) in the cytoplasm and with PStV viral genome-linked protein (VPg) in the nucleus; these interactions are possible in susceptible hosts but impaired in resistant plants. Post-translationally, according to the redox status, the Cys-129-Cys-167 disulfide bridge may have a role in regulating protein function by affecting its ability to bind capped mRNA. In terms of tissue distribution, expressed ubiquitously with highest levels in young leaves and roots, and lowest levels in flowers.

The protein resides in the nucleus. It is found in the cytoplasm. Functionally, component of the protein complex eIF4F, which is involved in the recognition of the mRNA cap, ATP-dependent unwinding of 5'-terminal secondary structure and recruitment of mRNA to the ribosome. Recognizes and binds the 7-methylguanosine-containing mRNA cap during an early step in the initiation of protein synthesis and facilitates ribosome binding by inducing the unwinding of the mRNAs secondary structures. Key component of recessive resistance to potyviruses such as peanut stripe virus (PStV). In terms of biological role, (Microbial infection) Susceptibility host factor required for viral infection by recruiting viral RNAs to the host ribosomal complex via an interaction with viral genome-linked protein (VPg). In Arachis hypogaea (Peanut), this protein is Eukaryotic translation initiation factor 4E-1.